The following is a 1210-amino-acid chain: Epidermal growth factor receptor (1210 aa).

Residues M1–A24 form the signal peptide. Topologically, residues L25–S645 are extracellular. A disulfide bond links C31 and C58. The stretch at D75–V300 is one Approximate repeat. N-linked (GlcNAc...) asparagine glycans are attached at residues N128, N175, and N196. Cystine bridges form between C157–C187, C190–C199, C194–C207, C215–C223, C219–C231, C232–C240, C236–C248, C251–C260, C264–C291, C295–C307, C311–C326, C329–C333, and C337–C362. Phosphoserine is present on S229. N-linked (GlcNAc...) asparagine glycosylation is found at N352, N361, N413, and N444. The stretch at Q390 to M600 is one Approximate repeat. Disulfide bonds link C470–C499, C506–C515, C510–C523, C526–C535, C539–C555, C558–C571, C562–C579, C582–C591, C595–C617, C620–C628, and C624–C636. N-linked (GlcNAc...) asparagine glycosylation is present at N528. N568 carries N-linked (GlcNAc...) asparagine glycosylation. An N-linked (GlcNAc...) asparagine glycan is attached at N603. Residues I646–M668 traverse the membrane as a helical segment. At R669–A1210 the chain is on the cytoplasmic side. T678 is subject to Phosphothreonine; by PKC and PKD/PRKD1. The segment at L688 to L704 is important for dimerization, phosphorylation and activation. Position 693 is a phosphothreonine; by PKD/PRKD1 (T693). S695 is subject to Phosphoserine. Residues F712 to L979 form the Protein kinase domain. A Glycyl lysine isopeptide (Lys-Gly) (interchain with G-Cter in ubiquitin) cross-link involves residue K716. L718–V726 contacts ATP. K737 participates in a covalent cross-link: Glycyl lysine isopeptide (Lys-Gly) (interchain with G-Cter in ubiquitin). Position 745 (K745) interacts with ATP. N6-(2-hydroxyisobutyryl)lysine is present on K745. Residues K754 and K757 each participate in a glycyl lysine isopeptide (Lys-Gly) (interchain with G-Cter in ubiquitin) cross-link. An ATP-binding site is contributed by T790–Q791. D837 serves as the catalytic Proton acceptor. D855 contributes to the ATP binding site. Residue K867 forms a Glycyl lysine isopeptide (Lys-Gly) (interchain with G-Cter in ubiquitin) linkage. Y869 bears the Phosphotyrosine mark. Residues K929, K960, and K970 each participate in a glycyl lysine isopeptide (Lys-Gly) (interchain with G-Cter in ubiquitin) cross-link. Phosphoserine occurs at positions 991 and 995. Phosphotyrosine; by autocatalysis occurs at positions 998 and 1016. Phosphoserine occurs at positions 1026 and 1039. T1041 is subject to Phosphothreonine. At S1042 the chain carries Phosphoserine. C1049 carries S-palmitoyl cysteine lipidation. S1064 bears the Phosphoserine mark. Y1069 is subject to Phosphotyrosine. Phosphoserine occurs at positions 1070, 1071, and 1081. 2 positions are modified to phosphotyrosine; by autocatalysis: Y1092 and Y1110. The tract at residues V1097–E1137 is disordered. 2 stretches are compositionally biased toward polar residues: residues S1104–L1115 and P1128–E1137. A lipid anchor (S-palmitoyl cysteine) is attached at C1146. Residue S1166 is modified to Phosphoserine. Phosphotyrosine; by autocatalysis is present on residues Y1172 and Y1197. An Omega-N-methylarginine modification is found at R1199.

The protein belongs to the protein kinase superfamily. Tyr protein kinase family. EGF receptor subfamily. As to quaternary structure, binding of the ligand triggers homo- and/or heterodimerization of the receptor triggering its autophosphorylation. Heterodimer with ERBB2. Forms a complex with CCDC88A/GIV (via SH2-like regions) and GNAI3 which leads to enhanced EGFR signaling and triggering of cell migration; binding to CCDC88A requires autophosphorylation of the EGFR C-terminal region, and ligand stimulation is required for recruitment of GNAI3 to the complex. Interacts with ERRFI1; inhibits dimerization of the kinase domain and autophosphorylation. Part of a complex with ERBB2 and either PIK3C2A or PIK3C2B. Interacts with GRB2; an adapter protein coupling the receptor to downstream signaling pathways. Interacts with GAB2; involved in signaling downstream of EGFR. Interacts with STAT3; mediates EGFR downstream signaling in cell proliferation. Interacts with RIPK1; involved in NF-kappa-B activation. Interacts (autophosphorylated) with CBL, CBLB and CBLC; involved in EGFR ubiquitination and regulation; interaction with CBL is reduced in the presence of tensin TNS4. Interacts with SOCS5; regulates EGFR degradation through ELOC- and ELOB-mediated ubiquitination and proteasomal degradation. Interacts with PRMT5; methylates EGFR and enhances interaction with PTPN6. Interacts (phosphorylated) with PTPN6; inhibits EGFR-dependent activation of MAPK/ERK. Interacts with COPG1; essential for regulation of EGF-dependent nuclear transport of EGFR by retrograde trafficking from the Golgi to the ER. Interacts with TNK2; this interaction is dependent on EGF stimulation and kinase activity of EGFR. Interacts with PCNA; positively regulates PCNA. Interacts with PELP1. Interacts with MUC1. Interacts with AP2M1. Interacts with FER. May interact with EPS8; mediates EPS8 phosphorylation. Interacts (via SH2 domains) with GRB2, NCK1 and NCK2. Interacts with ATXN2. Interacts with GAREM1. Interacts (ubiquitinated) with ANKRD13A/B/D; the interaction is direct and may regulate EGFR internalization after EGF stimulation. Interacts with GPER1; the interaction occurs in an estrogen-dependent manner. Interacts (via C-terminal cytoplasmic kinase domain) with ZPR1 (via zinc fingers). Interacts with RNF115 and RNF126. Interacts with GPRC5A (via its transmembrane domain). Interacts with FAM83B; positively regulates EGFR inducing its autophosphorylation in absence of stimulation by EGF. Interacts with LAPTM4B; positively correlates with EGFR activation. Interacts with STX19. Interacts with CD44. Interacts with PGRMC1; the interaction requires PGRMC1 homodimerization. Interacts with PIKFYVE. Interacts with NEU3. Interacts with TRAF4. Interacts with the ant venom OMEGA-myrmeciitoxin(02)-Mg1a. Interacts with CD82; this interaction facilitates ligand-induced endocytosis of the receptor and its subsequent desensitization. Post-translationally, phosphorylated on Tyr residues in response to EGF. Phosphorylation at Ser-695 is partial and occurs only if Thr-693 is phosphorylated. Phosphorylation at Thr-678 and Thr-693 by PRKD1 inhibits EGF-induced MAPK8/JNK1 activation. Dephosphorylation by PTPRJ prevents endocytosis and stabilizes the receptor at the plasma membrane. Autophosphorylation at Tyr-1197 is stimulated by methylation at Arg-1199 and enhances interaction with PTPN6. Autophosphorylation at Tyr-1092 and/or Tyr-1110 recruits STAT3. Dephosphorylated by PTPN1 and PTPN2. Monoubiquitinated and polyubiquitinated upon EGF stimulation; which does not affect tyrosine kinase activity or signaling capacity but may play a role in lysosomal targeting. Polyubiquitin linkage is mainly through 'Lys-63', but linkage through 'Lys-48', 'Lys-11' and 'Lys-29' also occurs. Deubiquitination by OTUD7B prevents degradation. Ubiquitinated by RNF115 and RNF126. Ubiquitinated by ZNRF1 or CBL at different lysines in response to EGF stimulation; leading to recruitment of the ESCRT machinery and subsequent degradation in the lysosomes. Deubiquitinated by UCHL1 leading to the inhibition of its degradation. In terms of processing, palmitoylated on Cys residues by ZDHHC20. Palmitoylation inhibits internalization after ligand binding, and increases the persistence of tyrosine-phosphorylated EGFR at the cell membrane. Palmitoylation increases the amplitude and duration of EGFR signaling. Post-translationally, methylated. Methylation at Arg-1199 by PRMT5 stimulates phosphorylation at Tyr-1197. Hypothalamus.

The protein resides in the cell membrane. It localises to the endoplasmic reticulum membrane. It is found in the golgi apparatus membrane. Its subcellular location is the nucleus membrane. The protein localises to the endosome. The protein resides in the endosome membrane. It localises to the nucleus. It carries out the reaction L-tyrosyl-[protein] + ATP = O-phospho-L-tyrosyl-[protein] + ADP + H(+). With respect to regulation, endocytosis and inhibition of the activated EGFR by phosphatases like PTPRJ and PTPRK constitute immediate regulatory mechanisms. Upon EGF-binding phosphorylates EPS15 that regulates EGFR endocytosis and activity. Moreover, inducible feedback inhibitors including LRIG1, SOCS4, SOCS5 and ERRFI1 constitute alternative regulatory mechanisms for the EGFR signaling. Receptor tyrosine kinase binding ligands of the EGF family and activating several signaling cascades to convert extracellular cues into appropriate cellular responses. Known ligands include EGF, TGFA/TGF-alpha, AREG, epigen/EPGN, BTC/betacellulin, epiregulin/EREG and HBEGF/heparin-binding EGF. Ligand binding triggers receptor homo- and/or heterodimerization and autophosphorylation on key cytoplasmic residues. The phosphorylated receptor recruits adapter proteins like GRB2 which in turn activates complex downstream signaling cascades. Activates at least 4 major downstream signaling cascades including the RAS-RAF-MEK-ERK, PI3 kinase-AKT, PLCgamma-PKC and STATs modules. May also activate the NF-kappa-B signaling cascade. Also directly phosphorylates other proteins like RGS16, activating its GTPase activity and probably coupling the EGF receptor signaling to the G protein-coupled receptor signaling. Also phosphorylates MUC1 and increases its interaction with SRC and CTNNB1/beta-catenin. Positively regulates cell migration via interaction with CCDC88A/GIV which retains EGFR at the cell membrane following ligand stimulation, promoting EGFR signaling which triggers cell migration. Plays a role in enhancing learning and memory performance. Plays a role in mammalian pain signaling (long-lasting hypersensitivity). The sequence is that of Epidermal growth factor receptor (EGFR) from Macaca mulatta (Rhesus macaque).